Reading from the N-terminus, the 511-residue chain is Probable mannosyl-oligosaccharide alpha-1,2-mannosidase 1B (511 aa).

Positions Met-1–Ala-18 are cleaved as a signal peptide. Asn-90 and Asn-177 each carry an N-linked (GlcNAc...) asparagine glycan. A disulfide bridge links Cys-327 with Cys-356. Glu-370 functions as the Proton donor in the catalytic mechanism. Residue Asn-433 is glycosylated (N-linked (GlcNAc...) asparagine). A Ca(2+)-binding site is contributed by Thr-501.

This sequence belongs to the glycosyl hydrolase 47 family. In terms of assembly, monomer. It depends on Ca(2+) as a cofactor. Mg(2+) is required as a cofactor.

The protein localises to the cytoplasmic vesicle lumen. It catalyses the reaction N(4)-(alpha-D-Man-(1-&gt;2)-alpha-D-Man-(1-&gt;2)-alpha-D-Man-(1-&gt;3)-[alpha-D-Man-(1-&gt;2)-alpha-D-Man-(1-&gt;3)-[alpha-D-Man-(1-&gt;2)-alpha-D-Man-(1-&gt;6)]-alpha-D-Man-(1-&gt;6)]-beta-D-Man-(1-&gt;4)-beta-D-GlcNAc-(1-&gt;4)-beta-D-GlcNAc)-L-asparaginyl-[protein] (N-glucan mannose isomer 9A1,2,3B1,2,3) + 4 H2O = N(4)-(alpha-D-Man-(1-&gt;3)-[alpha-D-Man-(1-&gt;3)-[alpha-D-Man-(1-&gt;6)]-alpha-D-Man-(1-&gt;6)]-beta-D-Man-(1-&gt;4)-beta-D-GlcNAc-(1-&gt;4)-beta-D-GlcNAc)-L-asparaginyl-[protein] (N-glucan mannose isomer 5A1,2) + 4 beta-D-mannose. The enzyme catalyses N(4)-(alpha-D-Man-(1-&gt;2)-alpha-D-Man-(1-&gt;2)-alpha-D-Man-(1-&gt;3)-[alpha-D-Man-(1-&gt;3)-[alpha-D-Man-(1-&gt;2)-alpha-D-Man-(1-&gt;6)]-alpha-D-Man-(1-&gt;6)]-beta-D-Man-(1-&gt;4)-beta-D-GlcNAc-(1-&gt;4)-beta-D-GlcNAc)-L-asparaginyl-[protein] (N-glucan mannose isomer 8A1,2,3B1,3) + 3 H2O = N(4)-(alpha-D-Man-(1-&gt;3)-[alpha-D-Man-(1-&gt;3)-[alpha-D-Man-(1-&gt;6)]-alpha-D-Man-(1-&gt;6)]-beta-D-Man-(1-&gt;4)-beta-D-GlcNAc-(1-&gt;4)-beta-D-GlcNAc)-L-asparaginyl-[protein] (N-glucan mannose isomer 5A1,2) + 3 beta-D-mannose. Its pathway is protein modification; protein glycosylation. Functionally, involved in the maturation of Asn-linked oligosaccharides. Progressively trims alpha-1,2-linked mannose residues from Man(9)GlcNAc(2) to produce Man(5)GlcNAc(2). This is Probable mannosyl-oligosaccharide alpha-1,2-mannosidase 1B (mns1B) from Aspergillus clavatus (strain ATCC 1007 / CBS 513.65 / DSM 816 / NCTC 3887 / NRRL 1 / QM 1276 / 107).